Here is a 113-residue protein sequence, read N- to C-terminus: Ribosome-binding factor A (113 aa).

Belongs to the RbfA family. Monomer. Binds 30S ribosomal subunits, but not 50S ribosomal subunits or 70S ribosomes.

The protein resides in the cytoplasm. Functionally, one of several proteins that assist in the late maturation steps of the functional core of the 30S ribosomal subunit. Associates with free 30S ribosomal subunits (but not with 30S subunits that are part of 70S ribosomes or polysomes). Required for efficient processing of 16S rRNA. May interact with the 5'-terminal helix region of 16S rRNA. The protein is Ribosome-binding factor A of Lactococcus lactis subsp. cremoris (Streptococcus cremoris).